Reading from the N-terminus, the 439-residue chain is MSGSNGSPRDLKAGGSLRGRVRVPGDKSISHRALLFGAIAEGTTTIEGLLPAEDPISTAACLRSMGTTISPIQSGEIVTIEGVGLDGLEEPSEILDCGNSGTTMRLMLGLLAGREGRHFVLTGDSSLRRRPMNRVGQPLSLLGANVRGRDHGNLAPLAVQGQRLRGAVVGTPVASAQVKSAILLAALTAEGSTSVIEPAHSRDHSERMLRAFGADLEVGGEMGRHILVRPGATLKGQHVVVPGDISSAAFWLVAGALVPGATITVENVGLNPTRTGILEVLEMMGASIEVLNRRDVAGEPVGDLQVSHGPLKAFQFGEEIMPRLVDEVPILSVAACFCDGESRISGAAELRVKETDRLAVMARQLKAMGADIDEHPDGLTIRGGHSLKGAELDSETDHRVAMSLAVAGLMAEGDSRITRSEAAAVSYPTFWDDLERLRR.

3 residues coordinate 3-phosphoshikimate: lysine 27, serine 28, and arginine 32. Lysine 27 serves as a coordination point for phosphoenolpyruvate. Phosphoenolpyruvate is bound by residues glycine 101 and arginine 130. Positions 175, 177, 326, and 353 each coordinate 3-phosphoshikimate. Glutamine 177 serves as a coordination point for phosphoenolpyruvate. Aspartate 326 acts as the Proton acceptor in catalysis. The phosphoenolpyruvate site is built by arginine 357 and arginine 399.

This sequence belongs to the EPSP synthase family. Monomer.

Its subcellular location is the cytoplasm. It catalyses the reaction 3-phosphoshikimate + phosphoenolpyruvate = 5-O-(1-carboxyvinyl)-3-phosphoshikimate + phosphate. Its pathway is metabolic intermediate biosynthesis; chorismate biosynthesis; chorismate from D-erythrose 4-phosphate and phosphoenolpyruvate: step 6/7. Its function is as follows. Catalyzes the transfer of the enolpyruvyl moiety of phosphoenolpyruvate (PEP) to the 5-hydroxyl of shikimate-3-phosphate (S3P) to produce enolpyruvyl shikimate-3-phosphate and inorganic phosphate. This chain is 3-phosphoshikimate 1-carboxyvinyltransferase, found in Synechococcus sp. (strain CC9311).